The sequence spans 607 residues: Matrix metalloproteinase-16 (607 aa).

The signal sequence occupies residues 1-31 (MILLAFSSGRRLDFVHRSGVFFLQTLLWILC). The propeptide occupies 32-119 (ATVCGTEQYF…SSKFNIRRKR (88 aa)). N-linked (GlcNAc...) asparagine glycosylation is present at Asn83. Residues 99–106 (PRCGVPDQ) carry the Cysteine switch motif. Zn(2+) is bound at residue Cys101. At 120–564 (YALTGQKWQH…LDNTASTVKA (445 aa)) the chain is on the extracellular side. Asp183 serves as a coordination point for Ca(2+). Zn(2+) is bound by residues His193 and Asp195. The Ca(2+) site is built by Asp200, Gly201, Gly203, and Phe205. His208 provides a ligand contact to Zn(2+). Ca(2+) is bound by residues Gly215, Gly217, and Asp219. A Zn(2+)-binding site is contributed by His221. Asp223 and Glu226 together coordinate Ca(2+). His246 lines the Zn(2+) pocket. Residue Glu247 is part of the active site. Positions 250 and 256 each coordinate Zn(2+). Residues 281–340 (DDLQGIQKIYGPPDKIPPPTRPLPTVPPHRSVPPADPRRHDRPKPPRPPTGRPSYPGAKP) are disordered. The segment covering 294 to 315 (DKIPPPTRPLPTVPPHRSVPPA) has biased composition (pro residues). Hemopexin repeat units follow at residues 340 to 388 (PNIC…WRGL), 389 to 434 (PPSI…GNGI), 436 to 484 (PHGI…KGIP), and 485 to 532 (ESPQ…FMGC). A disulfide bond links Cys343 and Cys532. Residues 565–585 (IAIVIPCILALCLLVLVYTVF) traverse the membrane as a helical segment. Over 586 to 607 (QFKRKGTPRHILYCKRSMQEWV) the chain is Cytoplasmic.

Belongs to the peptidase M10A family. Interacts with CSPG4 through CSPG4 chondroitin sulfate glycosaminoglycan. It depends on Zn(2+) as a cofactor. Ca(2+) is required as a cofactor. Post-translationally, the precursor is cleaved by a furin endopeptidase.

It is found in the cell membrane. Functionally, endopeptidase that degrades various components of the extracellular matrix, such as collagen type III and fibronectin. Activates progelatinase A. Involved in the matrix remodeling of blood vessels. It has no effect on type I, II, IV and V collagen. However, upon interaction with CSPG4, it may be involved in degradation and invasion of type I collagen by melanoma cells. This is Matrix metalloproteinase-16 (Mmp16) from Mus musculus (Mouse).